A 93-amino-acid polypeptide reads, in one-letter code: Small ribosomal subunit protein uS19 (93 aa).

It belongs to the universal ribosomal protein uS19 family.

In terms of biological role, protein S19 forms a complex with S13 that binds strongly to the 16S ribosomal RNA. The sequence is that of Small ribosomal subunit protein uS19 from Saccharopolyspora erythraea (strain ATCC 11635 / DSM 40517 / JCM 4748 / NBRC 13426 / NCIMB 8594 / NRRL 2338).